The following is a 605-amino-acid chain: Probable potassium transport system protein Kup (605 aa).

The next 12 helical transmembrane spans lie at 18–38, 46–66, 97–117, 138–158, 169–189, 204–224, 247–267, 287–307, 339–359, 368–388, 395–415, and 418–438; these read GLVF…IIAL, ILGI…LEYA, MAFV…DGVI, GLSQ…LFVF, AFGP…AISV, AISF…EVIL, AWYF…AFII, FYIP…QALI, IYIG…MLVF, AYGF…TMIF, WKVP…VSNC, and LPHG…VILI.

This sequence belongs to the HAK/KUP transporter (TC 2.A.72) family.

Its subcellular location is the cell inner membrane. The catalysed reaction is K(+)(in) + H(+)(in) = K(+)(out) + H(+)(out). Its function is as follows. Transport of potassium into the cell. Likely operates as a K(+):H(+) symporter. This is Probable potassium transport system protein Kup from Pelobacter propionicus (strain DSM 2379 / NBRC 103807 / OttBd1).